Reading from the N-terminus, the 38-residue chain is Spheniscin-1 (38 aa).

Intrachain disulfides connect C5–C33, C12–C27, and C17–C34.

As to quaternary structure, monomer. Secreted into the stomach cavity.

It localises to the secreted. In terms of biological role, has antifungal activity and antibacterial activity against Gram-positive and Gram-negative bacteria. Involved in the process of food preservation in the stomach during the incubation fast. May also be present during infection. This chain is Spheniscin-1, found in Aptenodytes patagonicus (King penguin).